The primary structure comprises 448 residues: NADP-specific glutamate dehydrogenase (448 aa).

Positions 88, 109, and 112 each coordinate substrate. Lysine 124 functions as the Proton donor in the catalytic mechanism. Glycine 163 lines the substrate pocket. Residues threonine 207 and asparagine 238 each coordinate NADP(+). Serine 381 contributes to the substrate binding site.

This sequence belongs to the Glu/Leu/Phe/Val dehydrogenases family. As to quaternary structure, homohexamer.

It carries out the reaction L-glutamate + NADP(+) + H2O = 2-oxoglutarate + NH4(+) + NADPH + H(+). Functionally, catalyzes the reversible oxidative deamination of glutamate to alpha-ketoglutarate and ammonia. The protein is NADP-specific glutamate dehydrogenase (gdhA) of Helicobacter pylori (strain ATCC 700392 / 26695) (Campylobacter pylori).